A 357-amino-acid polypeptide reads, in one-letter code: uncharacterized protein (357 aa).

The PNPLA domain maps to 27–196; that stretch reads LVCEGGGQRG…SDAIPVKEAA (170 aa). The GXGXXG signature appears at 31-36; the sequence is GGGQRG. Positions 59–63 match the GXSXG motif; it reads GTSAG. The Nucleophile role is filled by S61. Catalysis depends on D183, which acts as the Proton acceptor. A DGA/G motif is present at residues 183 to 185; that stretch reads DGG.

Probable lipid hydrolase. This is an uncharacterized protein from Escherichia coli (strain K12).